Reading from the N-terminus, the 264-residue chain is Cyclin-P1-1 (264 aa).

A disordered region spans residues 1 to 25 (MDAAAAAGGEMSRQKATASAPPPPE).

This sequence belongs to the cyclin family. Cyclin U/P subfamily.

The sequence is that of Cyclin-P1-1 (CYCP1-1) from Oryza sativa subsp. japonica (Rice).